A 307-amino-acid chain; its full sequence is ATP synthase gamma chain (307 aa).

It belongs to the ATPase gamma chain family. In terms of assembly, F-type ATPases have 2 components, CF(1) - the catalytic core - and CF(0) - the membrane proton channel. CF(1) has five subunits: alpha(3), beta(3), gamma(1), delta(1), epsilon(1). CF(0) has three main subunits: a, b and c.

Its subcellular location is the cell membrane. Produces ATP from ADP in the presence of a proton gradient across the membrane. The gamma chain is believed to be important in regulating ATPase activity and the flow of protons through the CF(0) complex. In Mycolicibacterium smegmatis (strain ATCC 700084 / mc(2)155) (Mycobacterium smegmatis), this protein is ATP synthase gamma chain.